The chain runs to 149 residues: MSDPIKLHDLRPAPGAKKAKTRVGRGEASKGKTAGRGTKGTKARKQVSAAFEGGQMPLHMRLPKLKGFKNPAKVTYQVVNVSDLEKAFSNGGDVTVADIVAAGLARKNQPVKVLGNGEISVKLNVTANKFSGSAKQKIEAAGGTVTEAK.

Residues 1–11 show a composition bias toward basic and acidic residues; that stretch reads MSDPIKLHDLR. A disordered region spans residues 1–44; that stretch reads MSDPIKLHDLRPAPGAKKAKTRVGRGEASKGKTAGRGTKGTKAR.

This sequence belongs to the universal ribosomal protein uL15 family. As to quaternary structure, part of the 50S ribosomal subunit.

In terms of biological role, binds to the 23S rRNA. The sequence is that of Large ribosomal subunit protein uL15 from Corynebacterium jeikeium (strain K411).